The following is a 461-amino-acid chain: MRPQVIIIGRPNVGKSTLFNRLVGKKLALVDDQPGVTRDRRFGDASLLGLDFTIVDTAGWEDEDPSTLPGRMRKQTEASLVGADVALFVIDARAGVTPLDEEIARYLRQSTVPIVLMANKAEGRAGDPGIFEAFSLGFGEPVAFSAEHGQGLADLFEALLPLIGEKQDDEDGEGEEAEDEEEEFDPESVLKLAIVGRPNAGKSTLINKLLGEDRLLTGPEAGITRDSIAIDWQWFDPEREAYRPVRLIDTAGMRKKAQVTDKLEKLSVADARHAIDFAEVVVLVLDATRGLEHQDLKIASMVIEEGRALMIAINKWDVAEDPSGLFQGIRKALDEGLAQVRGVPLLAISGRTGKGLDELLKAAFEIRAAWSKRVPTAALNRWFDDALAANPPPAPGGRRIKLRYITQAKTRPPGFVLFGTRLDQLPESYRRYLINGIRRELGFDAVPIRLTLRSPKNPFAK.

EngA-type G domains are found at residues 3-167 and 190-371; these read PQVI…GEKQ and LKLA…AAWS. Residues 9 to 16, 56 to 60, 119 to 122, 196 to 203, 249 to 253, and 314 to 317 each bind GTP; these read GRPNVGKS, DTAGW, NKAE, GRPNAGKS, DTAGM, and NKWD. The KH-like domain maps to 372-456; sequence KRVPTAALNR…PIRLTLRSPK (85 aa).

This sequence belongs to the TRAFAC class TrmE-Era-EngA-EngB-Septin-like GTPase superfamily. EngA (Der) GTPase family. As to quaternary structure, associates with the 50S ribosomal subunit.

Functionally, GTPase that plays an essential role in the late steps of ribosome biogenesis. This chain is GTPase Der, found in Novosphingobium aromaticivorans (strain ATCC 700278 / DSM 12444 / CCUG 56034 / CIP 105152 / NBRC 16084 / F199).